Consider the following 393-residue polypeptide: Probable acetyl-CoA acyltransferase (393 aa).

Cys-88 (acyl-thioester intermediate) is an active-site residue. Residues His-349 and Cys-378 each act as proton acceptor in the active site.

It belongs to the thiolase-like superfamily. Thiolase family.

The protein resides in the cytoplasm. It carries out the reaction 2 acetyl-CoA = acetoacetyl-CoA + CoA. In Staphylococcus aureus (strain bovine RF122 / ET3-1), this protein is Probable acetyl-CoA acyltransferase.